The chain runs to 461 residues: Photosystem II CP43 reaction center protein (461 aa).

Residues Met-1–Glu-2 constitute a propeptide that is removed on maturation. N-acetylthreonine is present on Thr-3. Residue Thr-3 is modified to Phosphothreonine. 5 consecutive transmembrane segments (helical) span residues Leu-57 to Ala-81, Leu-122 to Asn-143, Lys-166 to Thr-188, Gln-243 to Ser-263, and Trp-279 to Ser-300. A [CaMn4O5] cluster-binding site is contributed by Glu-355. Residues Arg-435 to Pro-459 traverse the membrane as a helical segment.

This sequence belongs to the PsbB/PsbC family. PsbC subfamily. In terms of assembly, PSII is composed of 1 copy each of membrane proteins PsbA, PsbB, PsbC, PsbD, PsbE, PsbF, PsbH, PsbI, PsbJ, PsbK, PsbL, PsbM, PsbT, PsbX, PsbY, PsbZ, Psb30/Ycf12, at least 3 peripheral proteins of the oxygen-evolving complex and a large number of cofactors. It forms dimeric complexes. Requires Binds multiple chlorophylls and provides some of the ligands for the Ca-4Mn-5O cluster of the oxygen-evolving complex. It may also provide a ligand for a Cl- that is required for oxygen evolution. PSII binds additional chlorophylls, carotenoids and specific lipids. as cofactor.

It localises to the plastid. It is found in the chloroplast thylakoid membrane. Its function is as follows. One of the components of the core complex of photosystem II (PSII). It binds chlorophyll and helps catalyze the primary light-induced photochemical processes of PSII. PSII is a light-driven water:plastoquinone oxidoreductase, using light energy to abstract electrons from H(2)O, generating O(2) and a proton gradient subsequently used for ATP formation. The protein is Photosystem II CP43 reaction center protein of Oedogonium cardiacum (Filamentous green alga).